We begin with the raw amino-acid sequence, 79 residues long: uncharacterized protein (79 aa).

This is an uncharacterized protein from Rhizobium leguminosarum.